Consider the following 289-residue polypeptide: Formamidopyrimidine-DNA glycosylase (289 aa).

The Schiff-base intermediate with DNA role is filled by proline 2. Catalysis depends on glutamate 3, which acts as the Proton donor. Lysine 61 functions as the Proton donor; for beta-elimination activity in the catalytic mechanism. 3 residues coordinate DNA: histidine 97, arginine 119, and lysine 168. The segment at 254 to 288 adopts an FPG-type zinc-finger fold; that stretch reads NAYGRAGKPCPRCGEPIVRVQWTNRSSHFCPQCQS. Catalysis depends on arginine 278, which acts as the Proton donor; for delta-elimination activity.

This sequence belongs to the FPG family. In terms of assembly, monomer. Requires Zn(2+) as cofactor.

The enzyme catalyses Hydrolysis of DNA containing ring-opened 7-methylguanine residues, releasing 2,6-diamino-4-hydroxy-5-(N-methyl)formamidopyrimidine.. It catalyses the reaction 2'-deoxyribonucleotide-(2'-deoxyribose 5'-phosphate)-2'-deoxyribonucleotide-DNA = a 3'-end 2'-deoxyribonucleotide-(2,3-dehydro-2,3-deoxyribose 5'-phosphate)-DNA + a 5'-end 5'-phospho-2'-deoxyribonucleoside-DNA + H(+). Functionally, involved in base excision repair of DNA damaged by oxidation or by mutagenic agents. Acts as a DNA glycosylase that recognizes and removes damaged bases. Has a preference for oxidized purines, such as 7,8-dihydro-8-oxoguanine (8-oxoG). Has AP (apurinic/apyrimidinic) lyase activity and introduces nicks in the DNA strand. Cleaves the DNA backbone by beta-delta elimination to generate a single-strand break at the site of the removed base with both 3'- and 5'-phosphates. This Corynebacterium urealyticum (strain ATCC 43042 / DSM 7109) protein is Formamidopyrimidine-DNA glycosylase.